A 204-amino-acid polypeptide reads, in one-letter code: Holliday junction branch migration complex subunit RuvA (204 aa).

Residues 1–67 (MIDYLYGTLD…GGVISLYGFF (67 aa)) are domain I. Residues 68 to 149 (TIEEREMYLL…TVNVLNKEKQ (82 aa)) form a domain II region. The tract at residues 150–154 (TGAET) is flexible linker. Residues 155 to 204 (IKNTMVSEAIAGLITLGYKMQQARVAVTNVYEHNENITLEDLIKKSLQYL) form a domain III region.

It belongs to the RuvA family. As to quaternary structure, homotetramer. Forms an RuvA(8)-RuvB(12)-Holliday junction (HJ) complex. HJ DNA is sandwiched between 2 RuvA tetramers; dsDNA enters through RuvA and exits via RuvB. An RuvB hexamer assembles on each DNA strand where it exits the tetramer. Each RuvB hexamer is contacted by two RuvA subunits (via domain III) on 2 adjacent RuvB subunits; this complex drives branch migration. In the full resolvosome a probable DNA-RuvA(4)-RuvB(12)-RuvC(2) complex forms which resolves the HJ.

The protein localises to the cytoplasm. Its function is as follows. The RuvA-RuvB-RuvC complex processes Holliday junction (HJ) DNA during genetic recombination and DNA repair, while the RuvA-RuvB complex plays an important role in the rescue of blocked DNA replication forks via replication fork reversal (RFR). RuvA specifically binds to HJ cruciform DNA, conferring on it an open structure. The RuvB hexamer acts as an ATP-dependent pump, pulling dsDNA into and through the RuvAB complex. HJ branch migration allows RuvC to scan DNA until it finds its consensus sequence, where it cleaves and resolves the cruciform DNA. This Endomicrobium trichonymphae protein is Holliday junction branch migration complex subunit RuvA.